Here is a 1130-residue protein sequence, read N- to C-terminus: Sodium/potassium/calcium exchanger 1 (1130 aa).

Topologically, residues M1–Q419 are extracellular. The segment at P104–E209 is disordered. The segment covering L125–T136 has biased composition (polar residues). The span at P170–R187 shows a compositional bias: basic and acidic residues. N176 and N273 each carry an N-linked (GlcNAc...) asparagine glycan. Positions I274–T295 are disordered. Residues T286–T295 show a composition bias toward polar residues. A helical membrane pass occupies residues G420–C440. The Cytoplasmic segment spans residues D441–A464. One copy of the Alpha-1 repeat lies at V461–F501. A helical membrane pass occupies residues T465–I485. The Extracellular portion of the chain corresponds to S486 to N489. The helical transmembrane segment at V490–C510 threads the bilayer. Residues A511–S530 are Cytoplasmic-facing. Residues F531–W551 form a helical membrane-spanning segment. Residue E552 is a topological domain, extracellular. The helical transmembrane segment at S553–I573 threads the bilayer. Over E574–K938 the chain is Cytoplasmic. The tract at residues P598–V619 is disordered. S625 is subject to Phosphoserine. The tract at residues G650–W932 is disordered. Positions S661–E675 are enriched in polar residues. A Phosphothreonine modification is found at T690. The segment covering Q703–E715 has biased composition (acidic residues). Residues E730–D751 show a composition bias toward basic and acidic residues. Acidic residues-rich tracts occupy residues G766–E782 and Q802–E820. Residues A833–Q855 show a composition bias toward basic and acidic residues. 2 stretches are compositionally biased toward acidic residues: residues G870–C880 and D896–L928. A helical membrane pass occupies residues Q939–V959. Over R960–K966 the chain is Extracellular. A helical membrane pass occupies residues F967–V987. The Cytoplasmic segment spans residues W988–E1002. A helical transmembrane segment spans residues I1003 to I1023. One copy of the Alpha-2 repeat lies at A1010 to N1041. Topologically, residues V1024–N1041 are extracellular. The helical transmembrane segment at I1042 to L1062 threads the bilayer. Residues Q1063–N1070 are Cytoplasmic-facing. A helical membrane pass occupies residues G1071–A1091. Residues S1092–K1099 are Extracellular-facing. A helical transmembrane segment spans residues I1100 to E1120. At D1121 to V1130 the chain is on the cytoplasmic side.

The protein belongs to the Ca(2+):cation antiporter (CaCA) (TC 2.A.19) family. SLC24A subfamily. The uncleaved signal sequence is required for efficient membrane targeting and proper membrane integration and topology.

The protein localises to the cell membrane. The catalysed reaction is Ca(2+)(out) + K(+)(out) + 4 Na(+)(in) = Ca(2+)(in) + K(+)(in) + 4 Na(+)(out). In terms of biological role, calcium, potassium:sodium antiporter that transports 1 Ca(2+) and 1 K(+) in exchange for 4 Na(+). Critical component of the visual transduction cascade, controlling the calcium concentration of outer segments during light and darkness. Light causes a rapid lowering of cytosolic free calcium in the outer segment of both retinal rod and cone photoreceptors and the light-induced lowering of calcium is caused by extrusion via this protein which plays a key role in the process of light adaptation. This Mus musculus (Mouse) protein is Sodium/potassium/calcium exchanger 1.